We begin with the raw amino-acid sequence, 279 residues long: Stathmin domain-containing protein 1 (279 aa).

2 disordered regions span residues 1-110 (MGCG…ERPK) and 178-254 (AAEE…VAQM). Glycine 2 is lipidated: N-myristoyl glycine. The span at 22–32 (KGWEEGSKADV) shows a compositional bias: basic and acidic residues. The segment covering 34–45 (VTSSKENCSPQT) has biased composition (polar residues). The SLD domain maps to 121–248 (QGIIQSRSKV…GEPLKRKKSE (128 aa)). Composition is skewed to basic and acidic residues over residues 178-191 (AAEE…EEIR) and 232-242 (EKSDVQEGEPL).

The protein is Stathmin domain-containing protein 1 (Stmnd1) of Mus musculus (Mouse).